A 440-amino-acid chain; its full sequence is UDP-glycosyltransferase 87A1 (440 aa).

UDP-alpha-D-glucose is bound by residues S263, 312–314 (CDQ), 329–337 (HCGYNSTLE), and 351–354 (FWDQ).

It belongs to the UDP-glycosyltransferase family.

The protein is UDP-glycosyltransferase 87A1 (UGT87A1) of Arabidopsis thaliana (Mouse-ear cress).